The following is a 76-amino-acid chain: Protein A9 homolog (76 aa).

The signal sequence occupies residues 1–21; the sequence is MSCYSSILNSISTLAFLQVAS. The Intravirion portion of the chain corresponds to 23–45; it reads VIELVRHCIMHFCETRIRCNTLA. A helical membrane pass occupies residues 46–66; it reads FVILKILITMVIYFMIGLGLF. The Virion surface portion of the chain corresponds to 67–76; the sequence is YLAKNGTEAE. An N-linked (GlcNAc...) asparagine; by host glycan is attached at N71.

This sequence belongs to the chordopoxvirinae A9 family.

It is found in the virion membrane. It localises to the host cytoplasm. Envelope protein. Required for an early step in virion morphogenesis. The sequence is that of Protein A9 homolog from Fowlpox virus (strain NVSL) (FPV).